The primary structure comprises 273 residues: MKKYLLGIGLILALIACKQNVSSLDEKNSASVDLPGEMKVLVSKEKDKDGKYSLKATVDKIELKGTSDKDNGSGVLEGTKDDKSKAKLTIADDLSKTTFELFKEDGKTLVSRKVSSKDKTSTDEMFNEKGELSAKTMTRENGTKLEYTEMKSDGTGKAKEVLKNFTLEGKVANDKVTLEVKEGTVTLSKEIAKSGEVTVALNDTNTTQATKKTGAWDSKTSTLTISVNSKKTTQLVFTKQDTITVQKYDSAGTNLEGTAVEIKTLDELKNALK.

Residues 1–16 form the signal peptide; that stretch reads MKKYLLGIGLILALIA. Cys-17 is lipidated: N-palmitoyl cysteine. Cys-17 carries the S-diacylglycerol cysteine lipid modification.

Belongs to the OspA lipoprotein family.

It is found in the cell outer membrane. The protein localises to the cell surface. This chain is Outer surface protein A, found in Borreliella burgdorferi (Lyme disease spirochete).